The chain runs to 150 residues: 1,4-dihydroxy-2-naphthoyl-CoA hydrolase (150 aa).

Asp-19 is a catalytic residue.

It belongs to the 4-hydroxybenzoyl-CoA thioesterase family. DHNA-CoA hydrolase subfamily.

The enzyme catalyses 1,4-dihydroxy-2-naphthoyl-CoA + H2O = 1,4-dihydroxy-2-naphthoate + CoA + H(+). The protein operates within cofactor biosynthesis; phylloquinone biosynthesis. It functions in the pathway quinol/quinone metabolism; 1,4-dihydroxy-2-naphthoate biosynthesis; 1,4-dihydroxy-2-naphthoate from chorismate: step 7/7. Catalyzes the hydrolysis of 1,4-dihydroxy-2-naphthoyl-CoA (DHNA-CoA) to 1,4-dihydroxy-2-naphthoate (DHNA), a reaction involved in phylloquinone (vitamin K1) biosynthesis. The chain is 1,4-dihydroxy-2-naphthoyl-CoA hydrolase from Prochlorococcus marinus (strain MIT 9515).